The following is a 618-amino-acid chain: Methylmalonyl-CoA mutase small subunit (618 aa).

The protein belongs to the methylmalonyl-CoA mutase family. Heterodimer of an alpha and a beta chain. Requires adenosylcob(III)alamin as cofactor.

The enzyme catalyses (R)-methylmalonyl-CoA = succinyl-CoA. Its pathway is metabolic intermediate metabolism; propanoyl-CoA degradation; succinyl-CoA from propanoyl-CoA: step 3/3. In terms of biological role, catalyzes the isomerization of succinyl-CoA to methylmalonyl-CoA during synthesis of propionate from tricarboxylic acid-cycle intermediates. The polypeptide is Methylmalonyl-CoA mutase small subunit (mutA) (Porphyromonas gingivalis (strain ATCC BAA-308 / W83)).